The following is a 239-amino-acid chain: Large ribosomal subunit protein uL2 (239 aa).

Disordered regions lie at residues 1-28 (MGKR…VGPA) and 199-239 (SHPH…RRKG). Over residues 225–239 (KVGHIAARRTGRRKG) the composition is skewed to basic residues.

This sequence belongs to the universal ribosomal protein uL2 family. In terms of assembly, part of the 50S ribosomal subunit. Forms a bridge to the 30S subunit in the 70S ribosome.

One of the primary rRNA binding proteins. Required for association of the 30S and 50S subunits to form the 70S ribosome, for tRNA binding and peptide bond formation. It has been suggested to have peptidyltransferase activity; this is somewhat controversial. Makes several contacts with the 16S rRNA in the 70S ribosome. This is Large ribosomal subunit protein uL2 from Staphylothermus marinus (strain ATCC 43588 / DSM 3639 / JCM 9404 / F1).